Here is a 273-residue protein sequence, read N- to C-terminus: Homeobox protein Nkx-2.2 (273 aa).

Disordered stretches follow at residues 1 to 56 (MSLT…LDAV) and 91 to 131 (AASA…KRKR). Residues 20 to 38 (DTNDEDGSVAEGPEEESEG) are compositionally biased toward acidic residues. A DNA-binding region (homeobox) is located at residues 128–187 (KRKRRVLFSKAQTYELERRFRQQRYLSAPEREHLASLIRLTPTQVKIWFQNHRYKMKRAR).

It belongs to the NK-2 homeobox family. Interacts with OLIG2. Expressed in restricted areas of the developing CNS: the hindbrain and forebrain, and pancreas.

The protein localises to the nucleus. Functionally, transcriptional activator involved in the development of insulin-producting beta cells in the endocrine pancreas. May also be involved in specifying diencephalic neuromeric boundaries, and in controlling the expression of genes that play a role in axonal guidance. Binds to elements within the NEUROD1 promoter. The sequence is that of Homeobox protein Nkx-2.2 (Nkx2-2) from Mus musculus (Mouse).